A 687-amino-acid chain; its full sequence is Glycine--tRNA ligase beta subunit (687 aa).

The protein belongs to the class-II aminoacyl-tRNA synthetase family. In terms of assembly, tetramer of two alpha and two beta subunits.

Its subcellular location is the cytoplasm. It carries out the reaction tRNA(Gly) + glycine + ATP = glycyl-tRNA(Gly) + AMP + diphosphate. The polypeptide is Glycine--tRNA ligase beta subunit (Lactobacillus acidophilus (strain ATCC 700396 / NCK56 / N2 / NCFM)).